A 107-amino-acid chain; its full sequence is MRGGIGNMMKQAQKLQEELKKAQEEIAKMEVTGESGGGMVAVTINGKHEARRVSIDPSLFEDDREMVEDLVAAAFNDAVHKLEQESQQRMAGLSEGMNLPSGFKLPF.

Belongs to the YbaB/EbfC family. Homodimer.

The protein resides in the cytoplasm. It is found in the nucleoid. Functionally, binds to DNA and alters its conformation. May be involved in regulation of gene expression, nucleoid organization and DNA protection. This chain is Nucleoid-associated protein Mlg_1509, found in Alkalilimnicola ehrlichii (strain ATCC BAA-1101 / DSM 17681 / MLHE-1).